The chain runs to 170 residues: Photosystem II extrinsic protein V (170 aa).

An N-terminal signal peptide occupies residues Met-1–Ala-34. Heme c is bound by residues Cys-70, Cys-73, His-74, and His-125.

Belongs to the cytochrome c family. PsbV subfamily. PSII is composed of 1 copy each of membrane proteins PsbA, PsbB, PsbC, PsbD, PsbE, PsbF, PsbH, PsbI, PsbJ, PsbK, PsbL, PsbM, PsbT, PsbX, PsbY, PsbZ, Psb30/Ycf12, peripheral proteins PsbO, CyanoQ (PsbQ), PsbU, PsbV and a large number of cofactors. It forms dimeric complexes. Heme c serves as cofactor.

Its subcellular location is the cellular thylakoid membrane. One of the extrinsic, lumenal subunits of photosystem II (PSII). PSII is a light-driven water plastoquinone oxidoreductase, using light energy to abstract electrons from H(2)O, generating a proton gradient subsequently used for ATP formation. The extrinsic proteins stabilize the structure of photosystem II oxygen-evolving complex (OEC), the ion environment of oxygen evolution and protect the OEC against heat-induced inactivation. Low-potential cytochrome c that plays a role in the OEC of PSII. This chain is Photosystem II extrinsic protein V, found in Picosynechococcus sp. (strain ATCC 27264 / PCC 7002 / PR-6) (Agmenellum quadruplicatum).